The sequence spans 326 residues: Ketol-acid reductoisomerase (NADP(+)) (326 aa).

Positions 2–182 (AKIYGDEDAS…GFTRAGVIKT (181 aa)) constitute a KARI N-terminal Rossmann domain. Residues 25–28 (YGSQ), arginine 48, serine 53, and 83–86 (DEVQ) each bind NADP(+). Histidine 108 is an active-site residue. Position 134 (glycine 134) interacts with NADP(+). The region spanning 183 to 325 (TFREEVETDL…ERLRKMMGFE (143 aa)) is the KARI C-terminal knotted domain. Mg(2+) contacts are provided by aspartate 191, glutamate 195, glutamate 227, and glutamate 231. Serine 252 is a binding site for substrate.

Belongs to the ketol-acid reductoisomerase family. Requires Mg(2+) as cofactor.

It catalyses the reaction (2R)-2,3-dihydroxy-3-methylbutanoate + NADP(+) = (2S)-2-acetolactate + NADPH + H(+). The enzyme catalyses (2R,3R)-2,3-dihydroxy-3-methylpentanoate + NADP(+) = (S)-2-ethyl-2-hydroxy-3-oxobutanoate + NADPH + H(+). It participates in amino-acid biosynthesis; L-isoleucine biosynthesis; L-isoleucine from 2-oxobutanoate: step 2/4. It functions in the pathway amino-acid biosynthesis; L-valine biosynthesis; L-valine from pyruvate: step 2/4. Its function is as follows. Involved in the biosynthesis of branched-chain amino acids (BCAA). Catalyzes an alkyl-migration followed by a ketol-acid reduction of (S)-2-acetolactate (S2AL) to yield (R)-2,3-dihydroxy-isovalerate. In the isomerase reaction, S2AL is rearranged via a Mg-dependent methyl migration to produce 3-hydroxy-3-methyl-2-ketobutyrate (HMKB). In the reductase reaction, this 2-ketoacid undergoes a metal-dependent reduction by NADPH to yield (R)-2,3-dihydroxy-isovalerate. The polypeptide is Ketol-acid reductoisomerase (NADP(+)) (Methanopyrus kandleri (strain AV19 / DSM 6324 / JCM 9639 / NBRC 100938)).